The chain runs to 76 residues: EMBRYO SURROUNDING FACTOR 1-like protein 8 (76 aa).

The first 22 residues, 1 to 22 (MSSSQFFILCIILISSFPLHEC), serve as a signal peptide directing secretion. Intrachain disulfides connect C38-C54, C43-C74, C52-C70, and C55-C63.

Belongs to the MEG family. In terms of tissue distribution, expressed in flowers.

The chain is EMBRYO SURROUNDING FACTOR 1-like protein 8 (ESFL8) from Arabidopsis thaliana (Mouse-ear cress).